The following is a 203-amino-acid chain: Thymidylate kinase (203 aa).

G14–S21 is a binding site for ATP.

This sequence belongs to the thymidylate kinase family.

The catalysed reaction is dTMP + ATP = dTDP + ADP. Functionally, phosphorylation of dTMP to form dTDP in both de novo and salvage pathways of dTTP synthesis. This chain is Thymidylate kinase, found in Rickettsia typhi (strain ATCC VR-144 / Wilmington).